Here is a 256-residue protein sequence, read N- to C-terminus: Trypsin CFT-1 (256 aa).

A signal peptide spans 1–17 (MRVTLALVALCLASVAA). Positions 18–24 (LPEKQQR) are cleaved as a propeptide — activation peptide. Positions 25–256 (IVGGSVTTIE…RFTAWIQANA (232 aa)) constitute a Peptidase S1 domain. The cysteines at positions 55 and 71 are disulfide-linked. Catalysis depends on charge relay system residues histidine 70 and aspartate 115. 2 disulfides stabilise this stretch: cysteine 180/cysteine 197 and cysteine 209/cysteine 233. Serine 213 acts as the Charge relay system in catalysis.

Belongs to the peptidase S1 family.

The protein localises to the secreted. Its subcellular location is the extracellular space. It catalyses the reaction Preferential cleavage: Arg-|-Xaa, Lys-|-Xaa.. In terms of biological role, responsible for the activation of delta-endotoxin from Bacillus thuringiensis. The chain is Trypsin CFT-1 from Choristoneura fumiferana (Spruce budworm moth).